A 274-amino-acid polypeptide reads, in one-letter code: MSLQEDIITQLGVKPKIDAQEEIRKSIDFLKAYMKKHGFLKSYVLGISGGQDSSLAGRLAQLAIEELRHETGDNGYKFIAIRLPYGVQADEDDAQRALNFIQPDVSLAINIKPAVDGEVAALAEAGVQVSDFNKGNIKARQRMISQYAVAGENGGAVIGTDHAAENITGFFTKFGDGGADILPLYRLNKRQGKQLLAELGADKALYEKIPTADLEENKPGIADEVALGVTYNDIDDYLEGKQVSPAAQKIIENWWNKTEHKRHLPISIFDDFWK.

46-53 (GISGGQDS) is a binding site for ATP. A Mg(2+)-binding site is contributed by aspartate 52. Arginine 140 lines the deamido-NAD(+) pocket. Threonine 160 lines the ATP pocket. Residue glutamate 165 participates in Mg(2+) binding. The deamido-NAD(+) site is built by lysine 173 and aspartate 180. ATP contacts are provided by lysine 189 and threonine 211. Residue 260–261 (HK) coordinates deamido-NAD(+).

The protein belongs to the NAD synthetase family. In terms of assembly, homodimer.

The catalysed reaction is deamido-NAD(+) + NH4(+) + ATP = AMP + diphosphate + NAD(+) + H(+). The protein operates within cofactor biosynthesis; NAD(+) biosynthesis; NAD(+) from deamido-NAD(+) (ammonia route): step 1/1. Its function is as follows. Catalyzes the ATP-dependent amidation of deamido-NAD to form NAD. Uses ammonia as a nitrogen source. The protein is NH(3)-dependent NAD(+) synthetase of Streptococcus mutans serotype c (strain ATCC 700610 / UA159).